A 361-amino-acid polypeptide reads, in one-letter code: Phosphoserine aminotransferase (361 aa).

Arg-43 contributes to the L-glutamate binding site. Residues 77 to 78 (AS), Trp-103, Thr-153, Asp-173, and Gln-196 contribute to the pyridoxal 5'-phosphate site. N6-(pyridoxal phosphate)lysine is present on Lys-197. 238 to 239 (NT) contacts pyridoxal 5'-phosphate.

It belongs to the class-V pyridoxal-phosphate-dependent aminotransferase family. SerC subfamily. Homodimer. Requires pyridoxal 5'-phosphate as cofactor.

The protein localises to the cytoplasm. It catalyses the reaction O-phospho-L-serine + 2-oxoglutarate = 3-phosphooxypyruvate + L-glutamate. The enzyme catalyses 4-(phosphooxy)-L-threonine + 2-oxoglutarate = (R)-3-hydroxy-2-oxo-4-phosphooxybutanoate + L-glutamate. Its pathway is amino-acid biosynthesis; L-serine biosynthesis; L-serine from 3-phospho-D-glycerate: step 2/3. In terms of biological role, catalyzes the reversible conversion of 3-phosphohydroxypyruvate to phosphoserine and of 3-hydroxy-2-oxo-4-phosphonooxybutanoate to phosphohydroxythreonine. This Bacillus anthracis (strain A0248) protein is Phosphoserine aminotransferase.